A 419-amino-acid polypeptide reads, in one-letter code: Elongation factor Tu, chloroplastic (419 aa).

The region spanning 10–214 (KPHVNIGTIG…KVDEYIPTPD (205 aa)) is the tr-type G domain. Residues 19-26 (GHVDHGKT) are G1. 19-26 (GHVDHGKT) lines the GTP pocket. Position 26 (threonine 26) interacts with Mg(2+). Positions 60–64 (GITIN) are G2. The G3 stretch occupies residues 81–84 (DCPG). GTP-binding positions include 81–85 (DCPGH) and 136–139 (NKED). The segment at 136-139 (NKED) is G4. The interval 174–176 (SAL) is G5.

This sequence belongs to the TRAFAC class translation factor GTPase superfamily. Classic translation factor GTPase family. EF-Tu/EF-1A subfamily.

The protein localises to the plastid. It is found in the chloroplast. The catalysed reaction is GTP + H2O = GDP + phosphate + H(+). GTP hydrolase that promotes the GTP-dependent binding of aminoacyl-tRNA to the A-site of ribosomes during protein biosynthesis. In Tetradesmus obliquus (Green alga), this protein is Elongation factor Tu, chloroplastic (tufA).